An 807-amino-acid chain; its full sequence is Glucocorticoid receptor (807 aa).

Disordered stretches follow at residues 1-47, 246-284, and 412-438; these read MDQG…LPSP, TDVNGTDQQHPLQHHQHQQQQHRHLLQHQQHQLHHQHQQ, and FSVSFSSSSPRTGENSSSAVPGLSKPS. The segment at 1–444 is modulating; the sequence is MDQGGLKRNC…SKPSGPTHKI (444 aa). Positions 257 to 282 are enriched in basic residues; the sequence is LQHHQHQQQQHRHLLQHQQHQLHHQH. Low complexity predominate over residues 412-421; that stretch reads FSVSFSSSSP. NR C4-type zinc fingers lie at residues 445–465 and 490–514; these read CLVCSDEASGCHYGVVTCGSC and CAGRNDCIIDKIRRKNCPACRFRKC. A DNA-binding region (nuclear receptor) is located at residues 445-519; it reads CLVCSDEASG…RFRKCLQAGM (75 aa). The hinge stretch occupies residues 520–553; that stretch reads NLEARKNKKLIKMKVHRPTGSAEPISNMPVPVIP. Positions 554–788 constitute an NR LBD domain; sequence RMPQLVPTML…FPEMLAEIIT (235 aa).

This sequence belongs to the nuclear hormone receptor family. NR3 subfamily. As to quaternary structure, heteromultimeric cytoplasmic complex with HSP90. Upon ligand binding the complex undergoes a conformation change and moves to the nucleus, where it dissociates. Binds to DNA as a homodimer, and as heterodimer with NR3C2. Interaction with numerous other transcription factors modulates transcription activation.

It is found in the cytoplasm. The protein localises to the nucleus. The protein resides in the mitochondrion. It localises to the cytoskeleton. Its subcellular location is the spindle. It is found in the microtubule organizing center. The protein localises to the centrosome. Receptor for glucocorticoids (GC). Has a dual mode of action: as a transcription factor that binds to glucocorticoid response elements (GRE), both for nuclear and mitochondrial DNA, and as a modulator of other transcription factors. Affects inflammatory responses, cellular proliferation and differentiation in target tissues. Involved in chromatin remodeling. Plays a role in rapid mRNA degradation by binding to the 5' UTR of target mRNAs and interacting with PNRC2 in a ligand-dependent manner which recruits the RNA helicase UPF1 and the mRNA-decapping enzyme DCP1A, leading to RNA decay. Could act as a coactivator for STAT5-dependent transcription upon growth hormone (GH) stimulation and could reveal an essential role of hepatic GR in the control of body growth. Mediates glucocorticoid-induced apoptosis. Promotes accurate chromosome segregation during mitosis. May act as a tumor suppressor. May play a negative role in adipogenesis through the regulation of lipolytic and antilipogenic gene expression. The polypeptide is Glucocorticoid receptor (nr3c1) (Paralichthys olivaceus (Bastard halibut)).